We begin with the raw amino-acid sequence, 388 residues long: Fibrinogen- and Ig-binding protein (388 aa).

A signal peptide spans 1-41 (MSKTNPNKLYSLRKLKTGTASVAVDLTVLGTGLANTTDVKA). 4 D repeats span residues 288–293 (EKLEAE), 294–299 (AKALKE), 302–307 (AKQAEE), and 309–314 (AKLKAD). The tract at residues 308-362 (LAKLKADKASGAQKPDTKPGNKEVPTRPSQTRTNTNKAPMAQTKRQLPSTGEETT) is disordered. The segment covering 322 to 332 (PDTKPGNKEVP) has biased composition (basic and acidic residues). The span at 334–362 (RPSQTRTNTNKAPMAQTKRQLPSTGEETT) shows a compositional bias: polar residues. The LPXTG sorting signal signature appears at 354–358 (LPSTG). Pentaglycyl murein peptidoglycan amidated threonine is present on Thr357. A propeptide spans 358–388 (GEETTNPFFTAAALTVIASAGVLALKRKEEN) (removed by sortase).

The protein resides in the secreted. It is found in the cell wall. Binds IgG molecules of the Ig1, Ig2 and Ig4 subclasses, and also binds fibrinogen. This Streptococcus pyogenes protein is Fibrinogen- and Ig-binding protein (mrp4).